The primary structure comprises 119 residues: Large ribosomal subunit protein bL20 (119 aa).

This sequence belongs to the bacterial ribosomal protein bL20 family.

In terms of biological role, binds directly to 23S ribosomal RNA and is necessary for the in vitro assembly process of the 50S ribosomal subunit. It is not involved in the protein synthesizing functions of that subunit. This chain is Large ribosomal subunit protein bL20, found in Xylella fastidiosa (strain M12).